Here is a 386-residue protein sequence, read N- to C-terminus: Bifunctional chorismate mutase/prephenate dehydratase (386 aa).

Residues 1–92 (MTSENPLLAL…DSVLTQQALL (92 aa)) form the Chorismate mutase domain. Residues R11, R28, K39, D48, E52, S84, and Q88 each contribute to the substrate site. The Prephenate dehydratase domain maps to 105–285 (RIAFLGPKGS…NFTRFVVLAR (181 aa)). Residues 299-376 (TLLMATGQQA…RSMKVLGCYP (78 aa)) form the ACT domain.

The protein localises to the cytoplasm. The enzyme catalyses chorismate = prephenate. It catalyses the reaction prephenate + H(+) = 3-phenylpyruvate + CO2 + H2O. It functions in the pathway amino-acid biosynthesis; L-phenylalanine biosynthesis; phenylpyruvate from prephenate: step 1/1. The protein operates within metabolic intermediate biosynthesis; prephenate biosynthesis; prephenate from chorismate: step 1/1. Its function is as follows. Catalyzes the Claisen rearrangement of chorismate to prephenate and the decarboxylation/dehydration of prephenate to phenylpyruvate. This Escherichia coli O157:H7 protein is Bifunctional chorismate mutase/prephenate dehydratase (pheA).